Consider the following 1342-residue polypeptide: DNA-directed RNA polymerase subunit beta (1342 aa).

It belongs to the RNA polymerase beta chain family. The RNAP catalytic core consists of 2 alpha, 1 beta, 1 beta' and 1 omega subunit. When a sigma factor is associated with the core the holoenzyme is formed, which can initiate transcription.

The catalysed reaction is RNA(n) + a ribonucleoside 5'-triphosphate = RNA(n+1) + diphosphate. Its function is as follows. DNA-dependent RNA polymerase catalyzes the transcription of DNA into RNA using the four ribonucleoside triphosphates as substrates. The chain is DNA-directed RNA polymerase subunit beta from Histophilus somni (strain 129Pt) (Haemophilus somnus).